We begin with the raw amino-acid sequence, 976 residues long: Protein PLASTID MOVEMENT IMPAIRED 1-RELATED 2 (976 aa).

The C2 NT-type domain occupies 81–229 (IAHFGQRRFD…VLNLSFDYSV (149 aa)). Residues 309-319 (KQAADSDDSGK) are compositionally biased toward basic and acidic residues. Disordered stretches follow at residues 309–343 (KQAA…ESSR) and 381–419 (NLLP…STEK). The segment covering 394-414 (STFSSQVISESSESKSPSAMD) has biased composition (low complexity).

Its function is as follows. Seems not necessary for chloroplast and nuclear photorelocation movements. The chain is Protein PLASTID MOVEMENT IMPAIRED 1-RELATED 2 from Arabidopsis thaliana (Mouse-ear cress).